A 538-amino-acid chain; its full sequence is Beta-1-syntrophin (538 aa).

Ala-2 is subject to N-acetylalanine. 2 consecutive PH domains span residues 19-298 (RAQR…SNVN) and 322-433 (EIRH…QGCH). Ser-87, Ser-126, and Ser-205 each carry phosphoserine. Residues 112 to 195 (GVKVLKQELG…EVLLEVKYMR (84 aa)) enclose the PDZ domain. A disordered region spans residues 205-237 (SPVSEIGWETPPPESPRLGGSTSDPPSSQSFSF). Thr-214 carries the post-translational modification Phosphothreonine. Phosphoserine is present on residues Ser-219, Ser-232, Ser-236, and Ser-389. Residues 225–236 (STSDPPSSQSFS) are compositionally biased toward low complexity. An SU domain is found at 482 to 538 (PYEKLKMSSDDGIRMLYLDFGGKDGEIQLDLHSCPKPIVFIIHSFLSAKITRLGLVA). Residues 518 to 538 (PIVFIIHSFLSAKITRLGLVA) are calmodulin-binding.

The protein belongs to the syntrophin family. As to quaternary structure, monomer and homodimer. Interacts with the other members of the syntrophin family SNTA1 and SNTB2; with the sodium channel proteins SCN4A and SCN5A. Interacts with the viral HTLV-1 TAX protein and with dystrophin protein DMD and related proteins DTNA and UTRN. Interacts with DTNB. Post-translationally, phosphorylated by CaM-kinase II. As to expression, ubiquitous.

The protein resides in the cell membrane. It localises to the sarcolemma. The protein localises to the cell junction. Its subcellular location is the cytoplasm. It is found in the cytoskeleton. Functionally, adapter protein that binds to and probably organizes the subcellular localization of a variety of membrane proteins. May link various receptors to the actin cytoskeleton and the dystrophin glycoprotein complex. This Homo sapiens (Human) protein is Beta-1-syntrophin (SNTB1).